Reading from the N-terminus, the 378-residue chain is Cytochrome b (378 aa).

Helical transmembrane passes span 34–54 (FGSL…FLAM), 78–99 (WFLR…FIHV), 114–134 (WMIG…GYVL), and 179–199 (FFTF…IHLL). His-84 and His-98 together coordinate heme b. Heme b is bound by residues His-183 and His-197. His-202 serves as a coordination point for a ubiquinone. Transmembrane regions (helical) follow at residues 227 to 247 (YKDI…IWKF), 289 to 309 (LGGV…PFTH), 321 to 341 (LNQI…WIGA), and 348 to 368 (YVLT…INPL).

This sequence belongs to the cytochrome b family. In terms of assembly, the main subunits of complex b-c1 are: cytochrome b, cytochrome c1 and the Rieske protein. Heme b is required as a cofactor.

It is found in the mitochondrion inner membrane. Functionally, component of the ubiquinol-cytochrome c reductase complex (complex III or cytochrome b-c1 complex) that is part of the mitochondrial respiratory chain. The b-c1 complex mediates electron transfer from ubiquinol to cytochrome c. Contributes to the generation of a proton gradient across the mitochondrial membrane that is then used for ATP synthesis. This chain is Cytochrome b, found in Aedes aegypti (Yellowfever mosquito).